Consider the following 103-residue polypeptide: Major carboxysome shell protein CsoS1 (103 aa).

Residues 9–94 (ALGMIETRGL…PHREVEPALG (86 aa)) form the BMC domain.

This sequence belongs to the bacterial microcompartments protein family. CsoS1 subfamily. Homohexamer with a small central pore. A CsoS1-CsoS1D-CsoS2 complex can be isolated following expression in E.coli. Forms a CsoS2-CsoS1-RuBisCO complex.

The protein resides in the carboxysome. The major shell protein of the carboxysome, a polyhedral inclusion where RuBisCO (ribulose bisphosphate carboxylase, ccbL-ccbS) is sequestered. Assembles into hexamers which make sheets that form the facets of the polyhedral carboxysome. There are estimated to be 538 CsoS1 hexamers per carboxysome; note this number includes the probable carboxysome shell vertex proteins CsoS4A and CsoS4B. In Prochlorococcus marinus subsp. pastoris (strain CCMP1986 / NIES-2087 / MED4), this protein is Major carboxysome shell protein CsoS1.